A 663-amino-acid chain; its full sequence is General transcription and DNA repair factor IIH subunit tcf-29 (663 aa).

BSD domains lie at tryptophan 147 to alanine 206 and glutamate 227 to lysine 278. Disordered stretches follow at residues aspartate 452 to glycine 491 and histidine 513 to proline 535. The span at serine 453–isoleucine 465 shows a compositional bias: basic and acidic residues. Residues threonine 515–threonine 528 are compositionally biased toward low complexity.

This sequence belongs to the TFB1 family. As to quaternary structure, component of the 7-subunit TFIIH core complex composed of XPB/rad25, XPD/dnr-10, tcf-30/SSL1, tcf-29/TFB1, tcf-11/TFB2, tcf-14/TFB4 and rtf-1/TFB5, which is active in NER. The core complex associates with the 3-subunit CTD-kinase module TFIIK composed of div-66/cyclin H, prk-3/KIN28 and rtf-2/TFB3 to form the 10-subunit holoenzyme (holo-TFIIH) active in transcription.

It localises to the nucleus. In terms of biological role, component of the general transcription and DNA repair factor IIH (TFIIH) core complex, which is involved in general and transcription-coupled nucleotide excision repair (NER) of damaged DNA and, when complexed to TFIIK, in RNA transcription by RNA polymerase II. In NER, TFIIH acts by opening DNA around the lesion to allow the excision of the damaged oligonucleotide and its replacement by a new DNA fragment. In transcription, TFIIH has an essential role in transcription initiation. When the pre-initiation complex (PIC) has been established, TFIIH is required for promoter opening and promoter escape. Phosphorylation of the C-terminal tail (CTD) of the largest subunit of RNA polymerase II by the kinase module TFIIK controls the initiation of transcription. This chain is General transcription and DNA repair factor IIH subunit tcf-29 (tcf-29), found in Neurospora crassa (strain ATCC 24698 / 74-OR23-1A / CBS 708.71 / DSM 1257 / FGSC 987).